A 314-amino-acid chain; its full sequence is Testis-specific Y-encoded protein 9 (314 aa).

It belongs to the nucleosome assembly protein (NAP) family.

The protein localises to the cytoplasm. It is found in the nucleus. Functionally, may be involved in sperm differentiation and proliferation. The chain is Testis-specific Y-encoded protein 9 from Homo sapiens (Human).